The primary structure comprises 319 residues: CD2 antigen cytoplasmic tail-binding protein 2 homolog (319 aa).

Disordered stretches follow at residues 1–57 (MASK…EDDV) and 105–124 (NAFD…KNEP). Positions 12–24 (KVKEESFKKHTLD) are enriched in basic and acidic residues. 2 positions are modified to phosphoserine: serine 25 and serine 30. Over residues 25 to 47 (SDEEDSDDYEREYLNDSDIEGGE) the composition is skewed to acidic residues. Phosphotyrosine is present on tyrosine 37. Serine 41 bears the Phosphoserine mark. Positions 109–124 (PAKDEENSSDEEKNEP) are enriched in basic and acidic residues. Positions 260-316 (EVTWEFKWSQDETDIQGPFSTEKMLKWSQENYFKNGVYVRKCGENTNFYTSNRIDFD) constitute a GYF domain.

It localises to the nucleus. Its function is as follows. Required for embryonic epithelial tissue repair, but not for the assembly of the actomyosin cable at the wound edge. Probably acts downstream of rl in the regulation of Ddc and msn transcription to promote wound healing. The chain is CD2 antigen cytoplasmic tail-binding protein 2 homolog (holn1) from Drosophila melanogaster (Fruit fly).